A 204-amino-acid polypeptide reads, in one-letter code: Synaptosomal-associated protein 25-A (204 aa).

Basic and acidic residues predominate over residues 1-11 (MAEDADMRNEL). Residues 1 to 25 (MAEDADMRNELSDMQQRADQLADES) are disordered. T-SNARE coiled-coil homology domains follow at residues 19 to 81 (DQLA…LNDL) and 138 to 200 (DARE…ATKM).

It belongs to the SNAP-25 family.

The protein resides in the synapse. It localises to the synaptosome. It is found in the cell membrane. Functionally, may play an important role in the synaptic function of specific neuronal systems. Associates with proteins involved in vesicle docking and membrane fusion. The sequence is that of Synaptosomal-associated protein 25-A (snap25a) from Carassius auratus (Goldfish).